The following is a 254-amino-acid chain: MSAADKDPDKHSADADPPLTVELLADLQAGLLDDATAARIRSRVRSDPQAQQILRALNRVRRDVAAMGADPAWGPAARPAVVDSISAALRSARPNSSPGAAHAARPHVHPVRMIAGAAGLCAVATAIGVGAVVDAPPPAPSAPTTAQHITVSKPAPVIPLSRPQVLDLLHHTPDYGPPGGPLGDPSRRTSCLSGLGYPASTPVLGAQPIDIDARPAVLLVIPADTPDKLAVFAVAPHCSAADTGLLASTVVPRA.

The Cytoplasmic segment spans residues 1–112 (MSAADKDPDK…AARPHVHPVR (112 aa)). The helical transmembrane segment at 113 to 133 (MIAGAAGLCAVATAIGVGAVV) threads the bilayer. Over 134 to 254 (DAPPPAPSAP…LLASTVVPRA (121 aa)) the chain is Extracellular.

In terms of assembly, interacts with ECF RNA polymerase sigma factor SigM; this should inhibit the interaction of SigM with the RNA polymerase catalytic core. In terms of processing, probably cleaved within the membrane by Rip1 near the cytoplasmic membrane interface.

It localises to the cell membrane. Its function is as follows. An anti-sigma factor for extracytoplasmic function (ECF) sigma factor SigM. ECF sigma factors are held in an inactive form by an anti-sigma factor until released by regulated intramembrane proteolysis (RIP). RIP occurs when an extracytoplasmic signal triggers a concerted proteolytic cascade to transmit information and elicit cellular responses. The membrane-spanning regulatory substrate protein is first cut extracytoplasmically (site-1 protease, S1P), then within the membrane itself (site-2 protease, S2P, Rip1), while cytoplasmic proteases finish degrading the regulatory protein, liberating the sigma factor. The chain is Anti-sigma-M factor RsmA (rsmA) from Mycobacterium tuberculosis (strain ATCC 35801 / TMC 107 / Erdman).